Here is a 163-residue protein sequence, read N- to C-terminus: Phosphopantetheine adenylyltransferase (163 aa).

Residue Thr10 participates in substrate binding. Residues 10–11 (TF) and His18 each bind ATP. Substrate-binding residues include Lys42, Leu75, and Arg89. Residues 90–92 (GVR), Glu100, and 125–131 (YTYVASS) contribute to the ATP site.

It belongs to the bacterial CoaD family. Homohexamer. It depends on Mg(2+) as a cofactor.

The protein resides in the cytoplasm. It carries out the reaction (R)-4'-phosphopantetheine + ATP + H(+) = 3'-dephospho-CoA + diphosphate. It functions in the pathway cofactor biosynthesis; coenzyme A biosynthesis; CoA from (R)-pantothenate: step 4/5. Reversibly transfers an adenylyl group from ATP to 4'-phosphopantetheine, yielding dephospho-CoA (dPCoA) and pyrophosphate. The sequence is that of Phosphopantetheine adenylyltransferase from Pelodictyon phaeoclathratiforme (strain DSM 5477 / BU-1).